The chain runs to 607 residues: Guanine nucleotide-binding protein-like 1 (607 aa).

Positions 1 to 14 (MPRKKPFSVKQKKK) are enriched in basic residues. A disordered region spans residues 1-81 (MPRKKPFSVK…GPRGYDPNRY (81 aa)). A compositionally biased stretch (basic and acidic residues) spans 15 to 26 (QLQDKRERKRGL). Phosphoserine is present on residues Ser-32, Ser-33, and Ser-34. Phosphothreonine occurs at positions 48 and 50. A phosphoserine mark is found at Ser-51 and Ser-68. The 241-residue stretch at 178–418 (WRQLWRVLEM…LCDCPGLIFP (241 aa)) folds into the CP-type G domain. Position 225–228 (225–228 (NKVD)) interacts with GTP. Ser-324 is subject to Phosphoserine. GTP is bound by residues 367–374 (GFPNVGKS) and 411–415 (DCPGL). Residues 547–607 (GPAGDEEEEE…PYALLGEDEC (61 aa)) are disordered. Over residues 550-584 (GDEEEEEEEELSSSCEEEGEEDRDADEEGEGDEDT) the composition is skewed to acidic residues. Ser-561, Ser-562, and Ser-563 each carry phosphoserine.

Belongs to the TRAFAC class YlqF/YawG GTPase family.

Its function is as follows. Possible regulatory or functional link with the histocompatibility cluster. This Macaca fascicularis (Crab-eating macaque) protein is Guanine nucleotide-binding protein-like 1 (GNL1).